A 570-amino-acid polypeptide reads, in one-letter code: Probable D-xylulose kinase A (570 aa).

Histidine 98, aspartate 279, and asparagine 280 together coordinate substrate. ATP is bound by residues tryptophan 363, 470-471 (GG), and asparagine 474.

This sequence belongs to the FGGY kinase family.

The protein localises to the cytoplasm. The enzyme catalyses D-xylulose + ATP = D-xylulose 5-phosphate + ADP + H(+). Highly specific D-xylulose kinase which participates in the catabolism of xylose. Xylose is a major component of hemicelluloses such as xylan. Most fungi utilize D-xylose via three enzymatic reactions, xylose reductase (XR), xylitol dehydrogenase (XDH), and xylulokinase, to form xylulose 5-phosphate, which enters pentose phosphate pathway. In Arthroderma otae (strain ATCC MYA-4605 / CBS 113480) (Microsporum canis), this protein is Probable D-xylulose kinase A (xkiA).